A 371-amino-acid chain; its full sequence is Jasmonate-induced oxygenase 2 (371 aa).

Residues 219 to 320 (NIGACLRVNY…RVSLAFFYNP (102 aa)) form the Fe2OG dioxygenase domain. A jasmonate-binding site is contributed by Arg-225. 2 residues coordinate 2-oxoglutarate: Asn-227 and Tyr-229. Fe cation-binding residues include His-244, Asp-246, and His-301. 2-oxoglutarate-binding residues include Arg-311 and Ser-313. Jasmonate contacts are provided by Arg-350 and Arg-354.

Belongs to the iron/ascorbate-dependent oxidoreductase family. Requires L-ascorbate as cofactor. It depends on Fe(2+) as a cofactor.

The enzyme catalyses jasmonate + 2-oxoglutarate + O2 = (1R,2R)-12-hydroxyjasmonate + succinate + CO2. Functionally, 2-oxoglutarate-dependent dioxygenase involved in the oxidation of jasmonate (JA), a stress-induced phytohormone synthesized in response to attack by pathogens and herbivores, which triggers the activation of defense responses via the JA-mediated signaling pathway. Converts JA to 12-hydroxyjasmonate (12OH-JA), an inactive form of JA. Is specific to free JA, and cannot oxidize the bioactive form jasmonoyl-L-isoleucine (JA-Ile) or other JA-amino acid conjugates. Prevents over-accumulation of JA and indirectly its bioactive form JA-Ile under stress response. Acts as a negative regulator of JA-mediated defense signaling, by contributing to 12OH-JA accumulation, which represses JA defense responses upon infection by the fungal pathogen Botrytis cinerea. Acts as a negative regulator of JA-mediated defense responses upon infestation by the herbivorous caterpillar Mamestra brassicae. May be involved in the catabolism of cytotoxic polycyclic aromatic hydrocarbons (PAHs). This is Jasmonate-induced oxygenase 2 from Arabidopsis thaliana (Mouse-ear cress).